The chain runs to 306 residues: Nod factor export ATP-binding protein I (306 aa).

The ABC transporter domain occupies 8-238; sequence IDLVGVRKSF…HIGCNVIEIY (231 aa). Residue 40-47 coordinates ATP; it reads GPNGAGKS.

Belongs to the ABC transporter superfamily. Lipooligosaccharide exporter (TC 3.A.1.102) family. In terms of assembly, the complex is composed of two ATP-binding proteins (NodI) and two transmembrane proteins (NodJ).

It is found in the cell inner membrane. Part of the ABC transporter complex NodIJ involved in the export of the nodulation factors (Nod factors), the bacterial signal molecules that induce symbiosis and subsequent nodulation induction. Nod factors are LCO (lipo-chitin oligosaccharide), a modified beta-1,4-linked N-acetylglucosamine oligosaccharide. This subunit is responsible for energy coupling to the transport system. In Bradyrhizobium diazoefficiens (strain JCM 10833 / BCRC 13528 / IAM 13628 / NBRC 14792 / USDA 110), this protein is Nod factor export ATP-binding protein I.